The chain runs to 205 residues: Imidazole glycerol phosphate synthase subunit HisH (205 aa).

A Glutamine amidotransferase type-1 domain is found at 3–205 (RIALLDYGMG…LLKNFVEWNI (203 aa)). Cys-80 (nucleophile) is an active-site residue. Active-site residues include His-185 and Glu-187.

As to quaternary structure, heterodimer of HisH and HisF.

The protein localises to the cytoplasm. It catalyses the reaction 5-[(5-phospho-1-deoxy-D-ribulos-1-ylimino)methylamino]-1-(5-phospho-beta-D-ribosyl)imidazole-4-carboxamide + L-glutamine = D-erythro-1-(imidazol-4-yl)glycerol 3-phosphate + 5-amino-1-(5-phospho-beta-D-ribosyl)imidazole-4-carboxamide + L-glutamate + H(+). It carries out the reaction L-glutamine + H2O = L-glutamate + NH4(+). It functions in the pathway amino-acid biosynthesis; L-histidine biosynthesis; L-histidine from 5-phospho-alpha-D-ribose 1-diphosphate: step 5/9. IGPS catalyzes the conversion of PRFAR and glutamine to IGP, AICAR and glutamate. The HisH subunit catalyzes the hydrolysis of glutamine to glutamate and ammonia as part of the synthesis of IGP and AICAR. The resulting ammonia molecule is channeled to the active site of HisF. The sequence is that of Imidazole glycerol phosphate synthase subunit HisH from Acinetobacter baylyi (strain ATCC 33305 / BD413 / ADP1).